Consider the following 329-residue polypeptide: Malate dehydrogenase (329 aa).

Residue 12–18 (GAAGQIC) coordinates NAD(+). Substrate-binding residues include Arg-95 and Arg-101. Residues Asn-108, Gln-115, and 132 to 134 (VGN) each bind NAD(+). Residues Asn-134 and Arg-165 each coordinate substrate. His-190 functions as the Proton acceptor in the catalytic mechanism.

This sequence belongs to the LDH/MDH superfamily. MDH type 2 family. Homodimer.

The catalysed reaction is (S)-malate + NAD(+) = oxaloacetate + NADH + H(+). Its function is as follows. Catalyzes the reversible oxidation of malate to oxaloacetate. This Aquaspirillum arcticum protein is Malate dehydrogenase.